Consider the following 388-residue polypeptide: LL-diaminopimelate aminotransferase (388 aa).

5 residues coordinate substrate: Tyr-13, Gly-38, Lys-102, Tyr-126, and Asn-176. Pyridoxal 5'-phosphate contacts are provided by residues 101–102, Tyr-126, Asn-176, Tyr-207, and 235–237; these read SK and SLS. Lys-238 bears the N6-(pyridoxal phosphate)lysine mark. Residue Arg-246 coordinates pyridoxal 5'-phosphate. Arg-364 contributes to the substrate binding site.

This sequence belongs to the class-I pyridoxal-phosphate-dependent aminotransferase family. LL-diaminopimelate aminotransferase subfamily. As to quaternary structure, homodimer. Pyridoxal 5'-phosphate serves as cofactor.

The enzyme catalyses (2S,6S)-2,6-diaminopimelate + 2-oxoglutarate = (S)-2,3,4,5-tetrahydrodipicolinate + L-glutamate + H2O + H(+). Its pathway is amino-acid biosynthesis; L-lysine biosynthesis via DAP pathway; LL-2,6-diaminopimelate from (S)-tetrahydrodipicolinate (aminotransferase route): step 1/1. In terms of biological role, involved in the synthesis of meso-diaminopimelate (m-DAP or DL-DAP), required for both lysine and peptidoglycan biosynthesis. Catalyzes the direct conversion of tetrahydrodipicolinate to LL-diaminopimelate. This chain is LL-diaminopimelate aminotransferase, found in Dehalococcoides mccartyi (strain ATCC BAA-2266 / KCTC 15142 / 195) (Dehalococcoides ethenogenes (strain 195)).